The sequence spans 340 residues: tRNA N6-adenosine threonylcarbamoyltransferase (340 aa).

The Fe cation site is built by His113 and His117. Residues 135 to 139 (LVSGG), Asp169, Gly182, Asp186, and Asn274 each bind substrate. Asp302 is a Fe cation binding site.

The protein belongs to the KAE1 / TsaD family. It depends on Fe(2+) as a cofactor.

The protein localises to the cytoplasm. It carries out the reaction L-threonylcarbamoyladenylate + adenosine(37) in tRNA = N(6)-L-threonylcarbamoyladenosine(37) in tRNA + AMP + H(+). Its function is as follows. Required for the formation of a threonylcarbamoyl group on adenosine at position 37 (t(6)A37) in tRNAs that read codons beginning with adenine. Is involved in the transfer of the threonylcarbamoyl moiety of threonylcarbamoyl-AMP (TC-AMP) to the N6 group of A37, together with TsaE and TsaB. TsaD likely plays a direct catalytic role in this reaction. The polypeptide is tRNA N6-adenosine threonylcarbamoyltransferase (Mycolicibacterium vanbaalenii (strain DSM 7251 / JCM 13017 / BCRC 16820 / KCTC 9966 / NRRL B-24157 / PYR-1) (Mycobacterium vanbaalenii)).